A 427-amino-acid polypeptide reads, in one-letter code: Glutamyl-tRNA(Gln) amidotransferase subunit D (427 aa).

Basic and acidic residues predominate over residues 1–18 (MTADPGDRVRVTHGDASH). The disordered stretch occupies residues 1 to 20 (MTADPGDRVRVTHGDASHEG). Residues 80-413 (PTIALISTGG…DDPEAAMQES (334 aa)) enclose the Asparaginase/glutaminase domain. Residues Thr-90, Thr-166, Asp-167, and Lys-243 contribute to the active site.

The protein belongs to the asparaginase 1 family. GatD subfamily. In terms of assembly, heterodimer of GatD and GatE.

It catalyses the reaction L-glutamyl-tRNA(Gln) + L-glutamine + ATP + H2O = L-glutaminyl-tRNA(Gln) + L-glutamate + ADP + phosphate + H(+). Functionally, allows the formation of correctly charged Gln-tRNA(Gln) through the transamidation of misacylated Glu-tRNA(Gln) in organisms which lack glutaminyl-tRNA synthetase. The reaction takes place in the presence of glutamine and ATP through an activated gamma-phospho-Glu-tRNA(Gln). The GatDE system is specific for glutamate and does not act on aspartate. This Halobacterium salinarum (strain ATCC 29341 / DSM 671 / R1) protein is Glutamyl-tRNA(Gln) amidotransferase subunit D.